Reading from the N-terminus, the 467-residue chain is Cysteine--tRNA ligase (467 aa).

Cys-29 lines the Zn(2+) pocket. The 'HIGH' region motif lies at 31–41 (PTVYDDSHLGH). The interval 155–174 (KLSGRGEDLEQVSRIESSEE) is disordered. The segment covering 158 to 174 (GRGEDLEQVSRIESSEE) has biased composition (basic and acidic residues). Positions 210, 239, and 243 each coordinate Zn(2+). Positions 271–275 (KMSKS) match the 'KMSKS' region motif. Lys-274 lines the ATP pocket.

This sequence belongs to the class-I aminoacyl-tRNA synthetase family. As to quaternary structure, monomer. The cofactor is Zn(2+).

It localises to the cytoplasm. The enzyme catalyses tRNA(Cys) + L-cysteine + ATP = L-cysteinyl-tRNA(Cys) + AMP + diphosphate. The chain is Cysteine--tRNA ligase from Wolinella succinogenes (strain ATCC 29543 / DSM 1740 / CCUG 13145 / JCM 31913 / LMG 7466 / NCTC 11488 / FDC 602W) (Vibrio succinogenes).